The sequence spans 279 residues: Putative hydroxypyruvate isomerase (279 aa).

Residues Glu155 and Glu256 each act as proton donor/acceptor in the active site. Residues 260-279 are disordered; the sequence is GDDPSAQSFSWLPAGARAAR.

The protein belongs to the hyi family.

It carries out the reaction 3-hydroxypyruvate = 2-hydroxy-3-oxopropanoate. Functionally, catalyzes the reversible isomerization between hydroxypyruvate and 2-hydroxy-3-oxopropanoate (also termed tartronate semialdehyde). The polypeptide is Putative hydroxypyruvate isomerase (Streptomyces coelicolor (strain ATCC BAA-471 / A3(2) / M145)).